The sequence spans 463 residues: Glycine--tRNA ligase (463 aa).

The substrate site is built by Arg98 and Glu170. ATP contacts are provided by residues 202–204 (RNE), 212–217 (FRTREF), 287–288 (EL), and 331–334 (GIER). 217–221 (FEQFE) is a substrate binding site. Residue 327–331 (EPSLG) participates in substrate binding.

Belongs to the class-II aminoacyl-tRNA synthetase family. As to quaternary structure, homodimer.

It localises to the cytoplasm. The enzyme catalyses tRNA(Gly) + glycine + ATP = glycyl-tRNA(Gly) + AMP + diphosphate. Functionally, catalyzes the attachment of glycine to tRNA(Gly). This chain is Glycine--tRNA ligase, found in Mycoplasmoides gallisepticum (strain R(low / passage 15 / clone 2)) (Mycoplasma gallisepticum).